The chain runs to 199 residues: Transcription factor 15 (199 aa).

Residues 25–67 (EENRSESDASDQSFGCCEGPEAARRGPGPGGGRRAGGGGGAGP) form a disordered region. Gly residues predominate over residues 51–66 (PGPGGGRRAGGGGGAG). In terms of domain architecture, bHLH spans 72-124 (RQRQAANARERDRTQSVNTAFTALRTLIPTEPVDRKLSKIETVRLASSYIAHL).

In terms of assembly, heterodimer; efficient DNA binding requires dimerization with another bHLH protein, such as TCF3/E12. Interacts with MEOX2.

It localises to the nucleus. In terms of biological role, early transcription factor that plays a key role in somitogenesis, paraxial mesoderm development and regulation of stem cell pluripotency. Essential for the mesenchymal to epithelial transition associated with somite formation. Required for somite morphogenesis, thereby regulating patterning of the axial skeleton and skeletal muscles. Required for proper localization of somite epithelium markers during the mesenchymal to epithelial transition. Also plays a key role in regulation of stem cell pluripotency. Promotes pluripotency exit of embryonic stem cells (ESCs) by priming ESCs for differentiation. Acts as a key regulator of self-renewal of hematopoietic stem cells (HSCs) by mediating HSCs quiescence and long-term self-renewal. Together with MEOX2, regulates transcription in heart endothelial cells to regulate fatty acid transport across heart endothelial cells. Acts by forming a heterodimer with another helix-loop-helix (bHLH) protein, such as TCF3/E12, that binds DNA on E-box motifs (5'-CANNTG-3') and activates transcription of target genes. This chain is Transcription factor 15, found in Homo sapiens (Human).